The following is a 396-amino-acid chain: 2-methyl-aconitate isomerase (396 aa).

Substrate contacts are provided by residues serine 19 and serine 66–lysine 70. The Proton donor/acceptor role is filled by cysteine 104. The residue at position 104 (cysteine 104) is a Cysteine sulfinic acid (-SO2H). Positions 106, 278, 309, and 314 each coordinate substrate. Catalysis depends on methionine 318, which acts as the Proton donor/acceptor. Glycine 319 lines the substrate pocket.

It belongs to the PrpF family. In terms of assembly, homodimer.

The enzyme catalyses 2-methyl-trans-aconitate = 2-methyl-cis-aconitate. The protein operates within organic acid metabolism; propanoate degradation. Functionally, catalyzes the isomerization of 2-methyl-trans-aconitate to yield 2-methyl-cis-aconitate through a base-catalyzed proton abstraction coupled with a rotation about C2-C3 bond of 2-methyl-aconitate. In Cupriavidus necator (Alcaligenes eutrophus), this protein is 2-methyl-aconitate isomerase.